The following is a 263-amino-acid chain: MKKVPLVIGGKTLSSRFFIGTGRYPNPVVQNETIKASGAEVLTFAIRRINLEHPDEDAILQHLEGRTFQYLPNTSGANNAEEAIRIARLARAAGLSDWIKVEISVSEKTLLPDPVETLKATEALAKEGFTVLPYTSDDPILCKKLEEVGAAAVMPGASPIGTGLGILNPYNLGVIVEEASVPIIVDAGLGSASDVAKAMELGADGVLMNTAVAKAKDPVKMALAMKQAIEAGLLSYEAGRIPMKRYATASSQLDHLLSSHSKG.

Lysine 100 acts as the Schiff-base intermediate with DXP in catalysis. 1-deoxy-D-xylulose 5-phosphate is bound by residues glycine 161, 187 to 188 (AG), and 209 to 210 (NT).

The protein belongs to the ThiG family. As to quaternary structure, homotetramer. Forms heterodimers with either ThiH or ThiS.

The protein localises to the cytoplasm. The enzyme catalyses [ThiS sulfur-carrier protein]-C-terminal-Gly-aminoethanethioate + 2-iminoacetate + 1-deoxy-D-xylulose 5-phosphate = [ThiS sulfur-carrier protein]-C-terminal Gly-Gly + 2-[(2R,5Z)-2-carboxy-4-methylthiazol-5(2H)-ylidene]ethyl phosphate + 2 H2O + H(+). It functions in the pathway cofactor biosynthesis; thiamine diphosphate biosynthesis. In terms of biological role, catalyzes the rearrangement of 1-deoxy-D-xylulose 5-phosphate (DXP) to produce the thiazole phosphate moiety of thiamine. Sulfur is provided by the thiocarboxylate moiety of the carrier protein ThiS. In vitro, sulfur can be provided by H(2)S. This Shouchella clausii (strain KSM-K16) (Alkalihalobacillus clausii) protein is Thiazole synthase.